The following is a 329-amino-acid chain: 4-hydroxythreonine-4-phosphate dehydrogenase (329 aa).

2 residues coordinate substrate: His-136 and Thr-137. 3 residues coordinate a divalent metal cation: His-166, His-211, and His-266. Substrate-binding residues include Lys-274, Asn-283, and Arg-292.

It belongs to the PdxA family. As to quaternary structure, homodimer. The cofactor is Zn(2+). Mg(2+) is required as a cofactor. Requires Co(2+) as cofactor.

It localises to the cytoplasm. The enzyme catalyses 4-(phosphooxy)-L-threonine + NAD(+) = 3-amino-2-oxopropyl phosphate + CO2 + NADH. It functions in the pathway cofactor biosynthesis; pyridoxine 5'-phosphate biosynthesis; pyridoxine 5'-phosphate from D-erythrose 4-phosphate: step 4/5. Functionally, catalyzes the NAD(P)-dependent oxidation of 4-(phosphooxy)-L-threonine (HTP) into 2-amino-3-oxo-4-(phosphooxy)butyric acid which spontaneously decarboxylates to form 3-amino-2-oxopropyl phosphate (AHAP). This Shigella sonnei (strain Ss046) protein is 4-hydroxythreonine-4-phosphate dehydrogenase.